A 369-amino-acid chain; its full sequence is F-box protein UCC1 (369 aa).

The 38-residue stretch at L8–K45 folds into the F-box domain.

In terms of assembly, component of the SCF(UCC1) E3 ubiquitin-protein ligase complex composed of CDC53, SKP1, RBX1 and UCC1. Interacts with CIT2. Post-translationally, monoubiquitinated by UBC4.

It participates in protein modification; protein ubiquitination. Substrate recognition component of the SKP1-CUL1-F-box protein E3 ubiquitin-protein ligase complex SCF(UCC1) which mediates the ubiquitination and subsequent proteasomal degradation of target proteins. The SCF(UCC1) complex acts as a metabolic switch for the glyoxylate cycle and regulates the level of CIT2 protein to maintain citrate homeostasis. This is F-box protein UCC1 (UCC1) from Saccharomyces cerevisiae (strain ATCC 204508 / S288c) (Baker's yeast).